Consider the following 334-residue polypeptide: MGPLMLDVLGYELNAEEREIIQHPTVGGIIFFARNYHDRAQLRALTKDIRKTAAKPLLIAVDQEGGRVQRFREEFTQLPPARAFEQHNNGIELAKKGGWLMAAELLAMDIDLSLAPVLDLGFDCKAIGDRAFSDDPKKIIKYASQFIKGMKQAGMATTGKHFPGHGGVIADSHLETPFDSRENIKEHDMIVFKYLIENNLLDAMMPAHVVFDAYDDKPASGSDYWLKQVLRQDLHFKGVIFSDDLNMKGADVMGSYSERAIAAQQAGCDMVMLCNNREGAIQALDGLPQVNVPILDTLLKRPTGEYQELIKTSMWKETEKEISRLSLEWREKHS.

Residues D62, R70, R130, and 160-161 each bind substrate; that span reads KH. Catalysis depends on H173, which acts as the Proton donor/acceptor. Catalysis depends on D243, which acts as the Nucleophile.

Belongs to the glycosyl hydrolase 3 family. NagZ subfamily.

The protein resides in the cytoplasm. It catalyses the reaction Hydrolysis of terminal non-reducing N-acetyl-D-hexosamine residues in N-acetyl-beta-D-hexosaminides.. The protein operates within cell wall biogenesis; peptidoglycan recycling. In terms of biological role, plays a role in peptidoglycan recycling by cleaving the terminal beta-1,4-linked N-acetylglucosamine (GlcNAc) from peptide-linked peptidoglycan fragments, giving rise to free GlcNAc, anhydro-N-acetylmuramic acid and anhydro-N-acetylmuramic acid-linked peptides. This is Beta-hexosaminidase from Photobacterium profundum (strain SS9).